A 478-amino-acid polypeptide reads, in one-letter code: Hexokinase (478 aa).

Residues 21–465 (EYLLKELTEL…LGAGAAIIAA (445 aa)) form the Hexokinase domain. A hexokinase small subdomain region spans residues 75–208 (TGKEMGDYLA…KVPIEVVALI (134 aa)). Lysine 111 is an ATP binding site. The tract at residues 151-177 (PLGFTFSYPASQGSINEGYLQRWTKGF) is glucose-binding. The interval 209–454 (NDTTGTLVAS…DPIVIVPAED (246 aa)) is hexokinase large subdomain.

Belongs to the hexokinase family. In terms of assembly, monomer.

It carries out the reaction a D-hexose + ATP = a D-hexose 6-phosphate + ADP + H(+). The catalysed reaction is D-fructose + ATP = D-fructose 6-phosphate + ADP + H(+). The enzyme catalyses D-glucose + ATP = D-glucose 6-phosphate + ADP + H(+). The protein operates within carbohydrate metabolism; hexose metabolism. Its pathway is carbohydrate degradation; glycolysis; D-glyceraldehyde 3-phosphate and glycerone phosphate from D-glucose: step 1/4. Its function is as follows. Catalyzes the phosphorylation of hexose, such as D-glucose and D-fructose, to hexose 6-phosphate (D-glucose 6-phosphate and D-fructose 6-phosphate, respectively). Mediates the initial step of glycolysis by catalyzing phosphorylation of D-glucose to D-glucose 6-phosphate. In Schwanniomyces occidentalis (Yeast), this protein is Hexokinase (HXK).